The chain runs to 237 residues: Uridylate kinase (237 aa).

9-12 (KLSG) provides a ligand contact to ATP. Gly-51 is a UMP binding site. Gly-52 and Arg-56 together coordinate ATP. UMP contacts are provided by residues Asp-71 and 132-139 (CGNPFFTT). 3 residues coordinate ATP: Thr-159, Tyr-165, and Asp-168.

It belongs to the UMP kinase family. In terms of assembly, homohexamer.

The protein resides in the cytoplasm. It carries out the reaction UMP + ATP = UDP + ADP. It participates in pyrimidine metabolism; CTP biosynthesis via de novo pathway; UDP from UMP (UMPK route): step 1/1. Its activity is regulated as follows. Inhibited by UTP. Functionally, catalyzes the reversible phosphorylation of UMP to UDP. This Prochlorococcus marinus (strain SARG / CCMP1375 / SS120) protein is Uridylate kinase.